Reading from the N-terminus, the 273-residue chain is NAD-dependent protein deacylase (273 aa).

Residues 20 to 272 enclose the Deacetylase sirtuin-type domain; sequence RERLRQRIFF…PEFVEKLLKG (253 aa). 48 to 67 contacts NAD(+); the sequence is GAGISAESGIRTFRAADGLW. Substrate-binding residues include Y92 and R95. An NAD(+)-binding site is contributed by 129 to 132; sequence QNID. The active-site Proton acceptor is the H147. Zn(2+) is bound by residues C155 and C174. NAD(+)-binding positions include 214-216, 240-242, and A258; these read GTS and NLE.

It belongs to the sirtuin family. Class III subfamily. Requires Zn(2+) as cofactor.

The protein localises to the cytoplasm. The catalysed reaction is N(6)-acetyl-L-lysyl-[protein] + NAD(+) + H2O = 2''-O-acetyl-ADP-D-ribose + nicotinamide + L-lysyl-[protein]. The enzyme catalyses N(6)-succinyl-L-lysyl-[protein] + NAD(+) + H2O = 2''-O-succinyl-ADP-D-ribose + nicotinamide + L-lysyl-[protein]. It carries out the reaction N(6)-(2-hydroxyisobutanoyl)-L-lysyl-[protein] + NAD(+) + H2O = 2''-O-(2-hydroxyisobutanoyl)-ADP-D-ribose + nicotinamide + L-lysyl-[protein]. NAD-dependent lysine deacetylase that specifically removes acetyl groups on target proteins. Also acts as a protein-lysine deacylase by mediating protein desuccinylation and de-2-hydroxyisobutyrylation. Modulates the activities of several proteins which are inactive in their acylated form. The polypeptide is NAD-dependent protein deacylase (Escherichia coli O157:H7).